The primary structure comprises 562 residues: Glutamine--tRNA ligase (562 aa).

Positions 35-45 (PEPNGYLHIGH) match the 'HIGH' region motif. Residues 36–38 (EPN) and 42–48 (HIGHAKS) contribute to the ATP site. Positions 68 and 213 each coordinate L-glutamine. Residues T232 and 264-265 (RL) contribute to the ATP site. The 'KMSKS' region motif lies at 271 to 275 (ITSKR).

It belongs to the class-I aminoacyl-tRNA synthetase family. Monomer.

It localises to the cytoplasm. It carries out the reaction tRNA(Gln) + L-glutamine + ATP = L-glutaminyl-tRNA(Gln) + AMP + diphosphate. This Neisseria meningitidis serogroup A / serotype 4A (strain DSM 15465 / Z2491) protein is Glutamine--tRNA ligase.